The primary structure comprises 1020 residues: 26S proteasome non-ATPase regulatory subunit 1 (1020 aa).

A disordered region spans residues 279-322 (TALPSTFKPQGTTSEDGAKSEGDKSKSDEDITEETPADDKVERT). Residues 281–293 (LPSTFKPQGTTSE) are compositionally biased toward polar residues. The residue at position 291 (threonine 291) is a Phosphothreonine. Positions 294 to 307 (DGAKSEGDKSKSDE) are enriched in basic and acidic residues. A phosphoserine mark is found at serine 298, serine 303, and serine 305. The residue at position 310 (threonine 310) is a Phosphothreonine. PC repeat units follow at residues 418-452 (TATA…SSGY), 456-489 (GALY…ENVR), 491-525 (GGCL…VTGE), 526-560 (AAGI…EKIL), 562-595 (GLAV…VLRR), 596-631 (SGMY…DVRR), 632-664 (AAVT…PHVR), 666-701 (GAAM…FVRQ), 702-742 (GALI…DVMA), and 745-777 (GAIL…QAVV). 2 disordered regions span residues 855–950 (QKRR…NPAR) and 999–1020 (FGPM…YIED). Basic and acidic residues-rich tracts occupy residues 858–867 (RENADKKEDE) and 876–939 (KEGA…KEPE). The segment covering 1003–1020 (NDEEKEPEPPEPFEYIED) has biased composition (acidic residues).

It belongs to the proteasome subunit S1 family.

Functionally, acts as a regulatory subunit of the 26S proteasome which is involved in the ATP-dependent degradation of ubiquitinated proteins. This Drosophila melanogaster (Fruit fly) protein is 26S proteasome non-ATPase regulatory subunit 1 (Rpn2).